A 371-amino-acid chain; its full sequence is O-antigen chain mannosyltransferase C (371 aa).

It belongs to the glycosyltransferase group 1 family. Glycosyltransferase 4 subfamily.

The enzyme catalyses N-acetyl-alpha-D-glucosaminyl-di-trans,octa-cis-undecaprenyl diphosphate + GDP-alpha-D-mannose = alpha-D-mannosyl-(1-&gt;3)-N-acetyl-alpha-D-glucosaminyl-di-trans,octa-cis-undecaprenyl diphosphate + GDP + H(+). Its pathway is bacterial outer membrane biogenesis; LPS O-antigen biosynthesis. Mannosyltransferase involved in the biosynthesis of the repeat unit of the lipopolysaccharide (LPS) O-antigen region. Catalyzes the transfer of a single alpha-(1-&gt;3)-linked mannose residue to the acceptor N-acetyl-glucosaminyl-diphospho-undecaprenol during the synthesis of the adapter region. This chain is O-antigen chain mannosyltransferase C, found in Escherichia coli.